A 191-amino-acid polypeptide reads, in one-letter code: HTH-type transcriptional regulator YjdC (191 aa).

The HTH tetR-type domain maps to 1 to 60 (MQREDVLGEALKLLELQGIANTTLEMVAERVDYPLDELRRFWPDKEAILYDALRYLSQQI).

In Escherichia coli (strain K12), this protein is HTH-type transcriptional regulator YjdC (yjdC).